We begin with the raw amino-acid sequence, 331 residues long: Endo-1,4-beta-xylanase 2 (331 aa).

An N-terminal signal peptide occupies residues 1-17 (MKASSVLLGLAPLAALA). The GH10 domain maps to 31-329 (QQSIDALMKA…KPAYNSVVQA (299 aa)). The N-linked (GlcNAc...) asparagine glycan is linked to Asn105. Glu159 functions as the Proton donor in the catalytic mechanism. The Nucleophile role is filled by Glu266. A disulfide bridge connects residues Cys284 and Cys290. Asn301 carries an N-linked (GlcNAc...) asparagine glycan.

Belongs to the glycosyl hydrolase 10 (cellulase F) family.

The protein localises to the secreted. The catalysed reaction is Endohydrolysis of (1-&gt;4)-beta-D-xylosidic linkages in xylans.. The protein operates within glycan degradation; xylan degradation. In terms of biological role, endo-1,4-beta-xylanase involved in the hydrolysis of xylan, a major structural heterogeneous polysaccharide found in plant biomass representing the second most abundant polysaccharide in the biosphere, after cellulose. Accounts for approximately 70 percent of the endoxylanase activity in the culture filtrate. The polypeptide is Endo-1,4-beta-xylanase 2 (XYL2) (Pyricularia grisea (Crabgrass-specific blast fungus)).